The sequence spans 257 residues: Sad1-interacting factor 1 (257 aa).

Residues 16–68 (LNKIKQGGASRINQILGQNSDDSQSDVRATASEEAVHSETATPVTPMSSGFME) form a disordered region. Polar residues-rich tracts occupy residues 26-37 (RINQILGQNSDD) and 54-63 (ETATPVTPMS). Ser35 carries the phosphoserine modification. Position 132 is a phosphoserine (Ser132). Phosphothreonine is present on Thr134. Transmembrane regions (helical) follow at residues 160 to 180 (LLAISIVVIVCYFKHLPLLPW) and 231 to 251 (FTQLITDACMTIFALGLCCYF).

As to quaternary structure, interacts with kms1 and sad1.

The protein localises to the membrane. In Schizosaccharomyces pombe (strain 972 / ATCC 24843) (Fission yeast), this protein is Sad1-interacting factor 1 (sif1).